Reading from the N-terminus, the 425-residue chain is MEQLRLEPISRVNGSVTLPGSKSLSNRILLLAALANGTTVVENLLDSDDIRHMLGALQLLGVNVSLNQERTVATVQGVGGVFKTPREPLFLGNAGTAYRPLTAVLAAVAGEYELIGEPRMEERPIGHLVDALQALGGDITYSKNKDYPPLKIIGGQINGGEVAIDGSISSQFLTALLMAAPLFNGDTKITIKGTLVSKPYIDITLDVMARFGIEVEHSNYATFTVKGGQQYQSLERIMVEGDASSASYFVAAAAIAGGEIEIKGVGAKSVQGDIGFAKVMEQVGAKIDWYDERLVVRKGQLNGVDIDANAIPDAAMTLATVALFAKGPTAIRNIYNWRVKETDRLHAMATELRKVGAEVVEGHDFIEITPPKHFNDVAIDTYDDHRIAMCFAMVAVGGKPITINDPKCTYKTFPTFFNVLASVSE.

Positions 22, 23, and 27 each coordinate 3-phosphoshikimate. K22 lines the phosphoenolpyruvate pocket. Phosphoenolpyruvate is bound by residues G95 and R123. 3-phosphoshikimate contacts are provided by S169, S170, Q171, S197, D313, N336, and K340. A phosphoenolpyruvate-binding site is contributed by Q171. The active-site Proton acceptor is D313. The phosphoenolpyruvate site is built by R344, R386, and K411.

The protein belongs to the EPSP synthase family. In terms of assembly, monomer.

The protein localises to the cytoplasm. The enzyme catalyses 3-phosphoshikimate + phosphoenolpyruvate = 5-O-(1-carboxyvinyl)-3-phosphoshikimate + phosphate. Its pathway is metabolic intermediate biosynthesis; chorismate biosynthesis; chorismate from D-erythrose 4-phosphate and phosphoenolpyruvate: step 6/7. Catalyzes the transfer of the enolpyruvyl moiety of phosphoenolpyruvate (PEP) to the 5-hydroxyl of shikimate-3-phosphate (S3P) to produce enolpyruvyl shikimate-3-phosphate and inorganic phosphate. The polypeptide is 3-phosphoshikimate 1-carboxyvinyltransferase (Pseudoalteromonas translucida (strain TAC 125)).